Reading from the N-terminus, the 514-residue chain is ATP synthase subunit alpha (514 aa).

Glycine 170–threonine 177 provides a ligand contact to ATP.

It belongs to the ATPase alpha/beta chains family. As to quaternary structure, F-type ATPases have 2 components, CF(1) - the catalytic core - and CF(0) - the membrane proton channel. CF(1) has five subunits: alpha(3), beta(3), gamma(1), delta(1), epsilon(1). CF(0) has three main subunits: a(1), b(2) and c(9-12). The alpha and beta chains form an alternating ring which encloses part of the gamma chain. CF(1) is attached to CF(0) by a central stalk formed by the gamma and epsilon chains, while a peripheral stalk is formed by the delta and b chains.

It localises to the cell inner membrane. The catalysed reaction is ATP + H2O + 4 H(+)(in) = ADP + phosphate + 5 H(+)(out). In terms of biological role, produces ATP from ADP in the presence of a proton gradient across the membrane. The alpha chain is a regulatory subunit. This is ATP synthase subunit alpha from Pseudomonas savastanoi pv. phaseolicola (strain 1448A / Race 6) (Pseudomonas syringae pv. phaseolicola (strain 1448A / Race 6)).